Here is a 262-residue protein sequence, read N- to C-terminus: Snake venom serine protease (262 aa).

The first 18 residues, 1–18, serve as a signal peptide directing secretion; sequence MVLIRVLANLLILQLSYA. Positions 19 to 24 are excised as a propeptide; that stretch reads QKSSEL. The 229-residue stretch at 25-253 folds into the Peptidase S1 domain; the sequence is VIGGDECNIN…YTEWIQSIIA (229 aa). 6 disulfide bridges follow: Cys-31/Cys-167, Cys-50/Cys-66, Cys-102/Cys-260, Cys-146/Cys-214, Cys-178/Cys-193, and Cys-204/Cys-229. Residues His-65 and Asp-114 each act as charge relay system in the active site. N-linked (GlcNAc...) asparagine glycans are attached at residues Asn-125 and Asn-158. Ser-208 serves as the catalytic Charge relay system.

Belongs to the peptidase S1 family. Snake venom subfamily. Monomer. As to expression, expressed by the venom gland.

It is found in the secreted. In terms of biological role, snake venom serine protease that may act in the hemostasis system of the prey. The chain is Snake venom serine protease from Crotalus durissus durissus (Central American rattlesnake).